The chain runs to 256 residues: Ubiquinone/menaquinone biosynthesis C-methyltransferase UbiE (256 aa).

S-adenosyl-L-methionine is bound by residues T79, D100, and 128–129 (DA).

The protein belongs to the class I-like SAM-binding methyltransferase superfamily. MenG/UbiE family.

The catalysed reaction is a 2-demethylmenaquinol + S-adenosyl-L-methionine = a menaquinol + S-adenosyl-L-homocysteine + H(+). It catalyses the reaction a 2-methoxy-6-(all-trans-polyprenyl)benzene-1,4-diol + S-adenosyl-L-methionine = a 5-methoxy-2-methyl-3-(all-trans-polyprenyl)benzene-1,4-diol + S-adenosyl-L-homocysteine + H(+). It participates in quinol/quinone metabolism; menaquinone biosynthesis; menaquinol from 1,4-dihydroxy-2-naphthoate: step 2/2. The protein operates within cofactor biosynthesis; ubiquinone biosynthesis. In terms of biological role, methyltransferase required for the conversion of demethylmenaquinol (DMKH2) to menaquinol (MKH2) and the conversion of 2-polyprenyl-6-methoxy-1,4-benzoquinol (DDMQH2) to 2-polyprenyl-3-methyl-6-methoxy-1,4-benzoquinol (DMQH2). The protein is Ubiquinone/menaquinone biosynthesis C-methyltransferase UbiE of Pseudomonas fluorescens (strain Pf0-1).